A 220-amino-acid polypeptide reads, in one-letter code: Protein-L-isoaspartate O-methyltransferase (220 aa).

The active site involves serine 68.

It belongs to the methyltransferase superfamily. L-isoaspartyl/D-aspartyl protein methyltransferase family.

Its subcellular location is the cytoplasm. The catalysed reaction is [protein]-L-isoaspartate + S-adenosyl-L-methionine = [protein]-L-isoaspartate alpha-methyl ester + S-adenosyl-L-homocysteine. In terms of biological role, catalyzes the methyl esterification of L-isoaspartyl residues in peptides and proteins that result from spontaneous decomposition of normal L-aspartyl and L-asparaginyl residues. It plays a role in the repair and/or degradation of damaged proteins. The sequence is that of Protein-L-isoaspartate O-methyltransferase from Dictyoglomus thermophilum (strain ATCC 35947 / DSM 3960 / H-6-12).